Consider the following 107-residue polypeptide: Nucleoid-associated protein Mmar10_0436 (107 aa).

This sequence belongs to the YbaB/EbfC family. Homodimer.

It is found in the cytoplasm. The protein localises to the nucleoid. Its function is as follows. Binds to DNA and alters its conformation. May be involved in regulation of gene expression, nucleoid organization and DNA protection. The protein is Nucleoid-associated protein Mmar10_0436 of Maricaulis maris (strain MCS10) (Caulobacter maris).